Reading from the N-terminus, the 127-residue chain is Large ribosomal subunit protein bL12 (127 aa).

It belongs to the bacterial ribosomal protein bL12 family. In terms of assembly, homodimer. Part of the ribosomal stalk of the 50S ribosomal subunit. Forms a multimeric L10(L12)X complex, where L10 forms an elongated spine to which 2 to 4 L12 dimers bind in a sequential fashion. Binds GTP-bound translation factors.

In terms of biological role, forms part of the ribosomal stalk which helps the ribosome interact with GTP-bound translation factors. Is thus essential for accurate translation. The polypeptide is Large ribosomal subunit protein bL12 (Chloroherpeton thalassium (strain ATCC 35110 / GB-78)).